Consider the following 242-residue polypeptide: ATP synthase subunit b (242 aa).

Transmembrane regions (helical) follow at residues 8–28 (VLPF…ASAP) and 87–107 (LMDL…LIKF).

It belongs to the ATPase B chain family. In terms of assembly, F-type ATPases have 2 components, F(1) - the catalytic core - and F(0) - the membrane proton channel. F(1) has five subunits: alpha(3), beta(3), gamma(1), delta(1), epsilon(1). F(0) has three main subunits: a(1), b(2) and c(10-14). The alpha and beta chains form an alternating ring which encloses part of the gamma chain. F(1) is attached to F(0) by a central stalk formed by the gamma and epsilon chains, while a peripheral stalk is formed by the delta and b chains.

Its subcellular location is the cell inner membrane. Functionally, f(1)F(0) ATP synthase produces ATP from ADP in the presence of a proton or sodium gradient. F-type ATPases consist of two structural domains, F(1) containing the extramembraneous catalytic core and F(0) containing the membrane proton channel, linked together by a central stalk and a peripheral stalk. During catalysis, ATP synthesis in the catalytic domain of F(1) is coupled via a rotary mechanism of the central stalk subunits to proton translocation. In terms of biological role, component of the F(0) channel, it forms part of the peripheral stalk, linking F(1) to F(0). The sequence is that of ATP synthase subunit b from Desulfotalea psychrophila (strain LSv54 / DSM 12343).